Here is a 421-residue protein sequence, read N- to C-terminus: 5-hydroxytryptamine receptor 1A (421 aa).

Residues 1-38 (MDMFSLGQGNNTTTSLEPFGTGGNDTGLSNVTFSYQVI) lie on the Extracellular side of the membrane. Asparagine 10, asparagine 11, asparagine 24, and asparagine 30 each carry an N-linked (GlcNAc...) asparagine glycan. A helical transmembrane segment spans residues 39–59 (TSLLLGTLIFCAVLGNACVVA). Topologically, residues 60–73 (AIALERSLQNVANY) are cytoplasmic. The chain crosses the membrane as a helical span at residues 74–98 (LIGSLAVTDLMVSVLVLPMAALYQV). The Extracellular portion of the chain corresponds to 99–107 (LNKWTLGQV). A helical membrane pass occupies residues 108 to 132 (TCDLFIALDVLCCTSSILHLCAIAL). A disulfide bridge links cysteine 109 with cysteine 187. Aspartate 116 and cysteine 120 together coordinate serotonin. Positions 133–135 (DRY) match the DRY motif; important for ligand-induced conformation changes motif. The Cytoplasmic portion of the chain corresponds to 133–152 (DRYWAITDPIDYVNKRTPRR). A helical transmembrane segment spans residues 153-174 (AAALISLTWLIGFLISIPPMLG). Residues 175–193 (WRTPEDRSNPNECTISKDH) lie on the Extracellular side of the membrane. The chain crosses the membrane as a helical span at residues 194–216 (GYTIYSTFGAFYIPLLLMLVLYG). The Cytoplasmic portion of the chain corresponds to 217–346 (RIFRAARFRI…LARERKTVKT (130 aa)). A disordered region spans residues 237–268 (GAGTSFGTSSAPPPKKSLNGQPGSGDCRRSAE). 1D-myo-inositol 4-phosphate-binding residues include threonine 314, lysine 345, threonine 346, and glycine 352. The chain crosses the membrane as a helical span at residues 347 to 370 (LGIIMGTFILCWLPFFIVALVLPF). Over 371–378 (CESSCHMP) the chain is Extracellular. The helical transmembrane segment at 379–403 (ELLGAIINWLGYSNSLLNPVIYAYF) threads the bilayer. The NPxxY motif; important for ligand-induced conformation changes and signaling signature appears at 396 to 400 (NPVIY). The 1D-myo-inositol 4-phosphate site is built by phenylalanine 403, asparagine 404, and lysine 405. Over 404–421 (NKDFQNAFKKIIKCKFCR) the chain is Cytoplasmic.

The protein belongs to the G-protein coupled receptor 1 family. 5-hydroxytryptamine receptor subfamily. HTR1A sub-subfamily. In terms of assembly, heterodimer; heterodimerizes with GPER1. Interacts with YIF1B. Interacts with GPR39 and GALR1. As to expression, most abundantly expressed in midbrain, in dorsal raphe and hippocampus. Detected at lower levels in amygdala and brain cortex.

Its subcellular location is the cell membrane. The protein localises to the cell projection. The protein resides in the dendrite. G-protein coupled receptor activity is regulated by lipids: phosphatidylinositol 4-phosphate increases HTR1A-mediated activity. Plays a role in the regulation of dopamine and 5-hydroxytryptamine levels in the brain, and thereby affects neural activity, mood and behavior. Plays a role in the response to anxiogenic stimuli. G-protein coupled receptor for 5-hydroxytryptamine (serotonin). Also functions as a receptor for various drugs and psychoactive substances. Ligand binding causes a conformation change that triggers signaling via guanine nucleotide-binding proteins (G proteins) and modulates the activity of downstream effectors, such as adenylate cyclase. HTR1A is coupled to G(i)/G(o) G alpha proteins and mediates inhibitory neurotransmission: signaling inhibits adenylate cyclase activity and activates a phosphatidylinositol-calcium second messenger system that regulates the release of Ca(2+) ions from intracellular stores. Beta-arrestin family members regulate signaling by mediating both receptor desensitization and resensitization processes. This Mus musculus (Mouse) protein is 5-hydroxytryptamine receptor 1A (Htr1a).